A 750-amino-acid polypeptide reads, in one-letter code: Glycerophosphodiester phosphodiesterase GDPDL7 (750 aa).

The N-terminal stretch at Met1–Ala17 is a signal peptide. 2 consecutive GP-PDE domains span residues Pro41–Ile339 and Ala355–Leu654. N-linked (GlcNAc...) asparagine glycosylation is found at Asn134, Asn304, Asn603, and Asn716.

This sequence belongs to the glycerophosphoryl diester phosphodiesterase family. In terms of tissue distribution, expressed in flowers and siliques.

The enzyme catalyses a sn-glycero-3-phosphodiester + H2O = an alcohol + sn-glycerol 3-phosphate + H(+). The polypeptide is Glycerophosphodiester phosphodiesterase GDPDL7 (Arabidopsis thaliana (Mouse-ear cress)).